The sequence spans 80 residues: Conotoxin Bu14 (80 aa).

Positions 1-8 (AACQLGTA) are cleaved as a signal peptide. A propeptide spanning residues 9-40 (ASFARDKQDYPAVRSDGRQDSKDSTLDRIAKR) is cleaved from the precursor. Cystine bridges form between cysteine 41/cysteine 55, cysteine 48/cysteine 59, and cysteine 54/cysteine 69.

Belongs to the conotoxin O1 superfamily. As to expression, expressed by the venom duct.

The protein resides in the secreted. The chain is Conotoxin Bu14 from Conus bullatus (Bubble cone).